The sequence spans 285 residues: Phosphatidylglycerol--prolipoprotein diacylglyceryl transferase (285 aa).

A run of 5 helical transmembrane segments spans residues 17-37 (ALGLSPIAFDLGVWHLFGLTL), 43-63 (WYALAYITGILLAWRYVLFLL), 78-98 (LVFWSTLGILVGGRLAYVLFY), 113-133 (WEGGMSYHGGMIGVFLAIWWV), and 139-159 (LSWLRIADYIGCAAPIGLFLG). Arginine 160 lines the a 1,2-diacyl-sn-glycero-3-phospho-(1'-sn-glycerol) pocket. 3 helical membrane-spanning segments follow: residues 195 to 215 (LYEAGLEGILLFAFLNYQFFA), 223 to 243 (GKLAGFFLVGYGLSRFIVEWF), and 256 to 276 (GLTMGQTLTIPMVIAGLWLII).

It belongs to the Lgt family.

It is found in the cell inner membrane. The catalysed reaction is L-cysteinyl-[prolipoprotein] + a 1,2-diacyl-sn-glycero-3-phospho-(1'-sn-glycerol) = an S-1,2-diacyl-sn-glyceryl-L-cysteinyl-[prolipoprotein] + sn-glycerol 1-phosphate + H(+). The protein operates within protein modification; lipoprotein biosynthesis (diacylglyceryl transfer). Catalyzes the transfer of the diacylglyceryl group from phosphatidylglycerol to the sulfhydryl group of the N-terminal cysteine of a prolipoprotein, the first step in the formation of mature lipoproteins. The protein is Phosphatidylglycerol--prolipoprotein diacylglyceryl transferase of Zymomonas mobilis subsp. mobilis (strain ATCC 31821 / ZM4 / CP4).